The chain runs to 466 residues: Zinc finger protein NUTCRACKER (466 aa).

Residues 1–23 (MTSEVLQTISSGSGFAQPQSSST) show a composition bias toward polar residues. The interval 1 to 29 (MTSEVLQTISSGSGFAQPQSSSTLDHDES) is disordered. A Phosphoserine modification is found at serine 56. Residues 66-88 (FLCEVCGKGFQRDQNLQLHRRGH) form a C2H2-type 1 zinc finger. At threonine 98 the chain carries Phosphothreonine; by KIN10. Residues 107-137 (YVCPEKTCVHHHSSRALGDLTGIKKHFCRKH) form a C2H2-type 2 zinc finger. The short motif at 134–141 (CRKHGEKK) is the Nuclear localization signal element. Residues 142–165 (WTCEKCAKRYAVQSDWKAHSKTCG) form a C2H2-type 2; degenerate zinc finger. The Zn(2+) site is built by cysteine 144, cysteine 147, histidine 160, cysteine 164, cysteine 171, and cysteine 173. A CCHC-type 2; atypical zinc finger spans residues 169 to 192 (YRCDCGTIFSRRDSFITHRAFCDA). Residues serine 178 and serine 182 each carry the phosphoserine; by KIN10 modification. An SHR-binding region spans residues 179–191 (RRDSFITHRAFCD). Residues histidine 186 and cysteine 190 each coordinate Zn(2+).

As to quaternary structure, interacts with AKIN10. Post-translationally, inhibition of transcription factor activity by KIN10-mediated phosphorylation at Thr-98, Ser-178 and Ser-182 under sugar deprivation conditions, thus delaying flowering. Highly expressed in vegetative organs and at lower levels in flowers and siliques. Expressed predominantly in roots. In roots, present in cortex, endodermis, and pericycle layer.

The protein localises to the nucleus. Transcription activator that binds to the DNA sequence 5'-CTTTTGTCC-3'. Regulates photoperiodic flowering by modulating sugar transport and metabolism. Regulates SUS1 and SUS4. Transcription factor that regulates tissue boundaries and asymmetric cell division. Contributes to the sequestration of 'SHORT-ROOT' to the nucleus. The polypeptide is Zinc finger protein NUTCRACKER (Arabidopsis thaliana (Mouse-ear cress)).